We begin with the raw amino-acid sequence, 256 residues long: uncharacterized protein (256 aa).

Residues 187–223 are a coiled coil; it reads MEEEEISEVEDALNVLQRLCAQEEGDNKEAETNNNNY.

This is an uncharacterized protein from Ostreid herpesvirus 1 (isolate France) (OsHV-1).